A 167-amino-acid polypeptide reads, in one-letter code: Pathogenesis-related protein PRMS (167 aa).

A signal peptide spans 1–27; the sequence is MEASNKLAVLLLWLVMAAATAVHPSYS. The region spanning 37–155 is the SCP domain; it reads PQNSARAAVG…NRGVFIICNY (119 aa). Cystine bridges form between Cys71-Cys143, Cys116-Cys122, and Cys138-Cys153.

Belongs to the CRISP family.

Its function is as follows. Probably involved in the defense reaction of plants against pathogens. The protein is Pathogenesis-related protein PRMS (PRMS) of Zea mays (Maize).